The following is a 252-amino-acid chain: 2-succinyl-6-hydroxy-2,4-cyclohexadiene-1-carboxylate synthase (252 aa).

Belongs to the AB hydrolase superfamily. MenH family. As to quaternary structure, monomer.

The enzyme catalyses 5-enolpyruvoyl-6-hydroxy-2-succinyl-cyclohex-3-ene-1-carboxylate = (1R,6R)-6-hydroxy-2-succinyl-cyclohexa-2,4-diene-1-carboxylate + pyruvate. The protein operates within quinol/quinone metabolism; 1,4-dihydroxy-2-naphthoate biosynthesis; 1,4-dihydroxy-2-naphthoate from chorismate: step 3/7. It functions in the pathway quinol/quinone metabolism; menaquinone biosynthesis. Functionally, catalyzes a proton abstraction reaction that results in 2,5-elimination of pyruvate from 2-succinyl-5-enolpyruvyl-6-hydroxy-3-cyclohexene-1-carboxylate (SEPHCHC) and the formation of 2-succinyl-6-hydroxy-2,4-cyclohexadiene-1-carboxylate (SHCHC). This chain is 2-succinyl-6-hydroxy-2,4-cyclohexadiene-1-carboxylate synthase, found in Shigella flexneri serotype 5b (strain 8401).